Reading from the N-terminus, the 346-residue chain is mRNA endoribonuclease LsoA (346 aa).

Can form a complex with cognate antitoxin LsoB and with enterobacteria phage T4 antitoxin Dmd.

Functionally, toxic component of a type II toxin-antitoxin (TA) system. A stable (half-life over 20 minutes) endoribonuclease that degrades mRNA. Degradation may be translation-stimulated. Overexpression in the absence of cognate antitoxin LsoB causes retarded growth and mRNA degradation, this effect is mitigated upon coexpression with antitoxin LsoB or enterobacteria phage T4 Dmd. Degrades late enterobacteria phage T4 mRNAs, protecting the host against T4 reproduction. In Escherichia coli O157:H7, this protein is mRNA endoribonuclease LsoA (lsoA).